The sequence spans 89 residues: Islet amyloid polypeptide (89 aa).

The first 22 residues, 1-22 (MCLLKLPVVLIVLLVALHHLKA), serve as a signal peptide directing secretion. A propeptide spanning residues 23–31 (TPIESNQVE) is cleaved from the precursor. A disulfide bridge links C35 with C40. Y70 is subject to Tyrosine amide. The propeptide occupies 74–89 (STVDILNREPLNYLPF).

This sequence belongs to the calcitonin family. As to quaternary structure, can form homodimers. Interacts with IDE and INS. Interaction with INS inhibits homodimerization and fibril formation.

The protein resides in the secreted. Functionally, amylin/IAPP is a glucoregulatory peptide hormone that plays an important role in the regulation of energy homeostasis. Selectively inhibits insulin-stimulated glucose utilization and glycogen deposition in muscle, while not affecting adipocyte glucose metabolism. IAPP function is mediated by the CALCR-RAMPs (AMYRs) receptor complexes. Amylin can also bind CALCR receptor in the absence of RAMPs, although it is more selective for AMYRs. This chain is Islet amyloid polypeptide (IAPP), found in Felis catus (Cat).